A 138-amino-acid chain; its full sequence is uncharacterized protein (138 aa).

2 consecutive transmembrane segments (helical) span residues 21–43 and 48–65; these read TAFI…AGGA and SLIA…YAII.

The protein localises to the cell membrane. This is an uncharacterized protein from Archaeoglobus fulgidus (strain ATCC 49558 / DSM 4304 / JCM 9628 / NBRC 100126 / VC-16).